Reading from the N-terminus, the 873-residue chain is Actin-related protein 8 (873 aa).

Residues 108–129 form a disordered region; it reads DEQVKPTSSTSSTSTTEEVEIK. Residues 114–123 show a composition bias toward low complexity; it reads TSSTSSTSTT. ATP is bound at residue 368-371; the sequence is DLGH. Low complexity predominate over residues 596–650; it reads NNNNNNNNSSSSSNNNNNNNNSGSNSNINSYNNNNNNNNNNNNNNNNNNNNSFNN. The tract at residues 596 to 701 is disordered; that stretch reads NNNNNNNNSS…TSSPTKKLKI (106 aa). Residues 651-668 show a composition bias toward polar residues; the sequence is VTIVTSTLNSNSTVPSTL. The segment covering 669–696 has biased composition (low complexity); sequence NSNSTVPSISNSNSTVPSTSTSTTSSPT. Positions 762-804 form a coiled coil; that stretch reads FKQLEQQYQAQQLQFQQQLQQQQQQQQQLQQQLQNSTNSATTT.

The protein belongs to the actin family. ARP8 subfamily. In terms of assembly, component of the chromatin remodeling INO80 complex. Exists as monomers and dimers, but the dimer is most probably the biologically relevant form required for stable interactions with histones that exploits the twofold symmetry of the nucleosome core.

The protein localises to the nucleus. Its subcellular location is the cytoplasm. The protein resides in the cytoskeleton. Functionally, plays an important role in the functional organization of mitotic chromosomes. Exhibits low basal ATPase activity, and unable to polymerize. Its function is as follows. Proposed core component of the chromatin remodeling INO80 complex which is involved in transcriptional regulation, DNA replication and probably DNA repair. Strongly prefer nucleosomes and H3-H4 tetramers over H2A-H2B dimers, suggesting it may act as a nucleosome recognition module within the complex. The protein is Actin-related protein 8 of Dictyostelium discoideum (Social amoeba).